The sequence spans 168 residues: G/U mismatch-specific DNA glycosylase (168 aa).

Belongs to the uracil-DNA glycosylase (UDG) superfamily. TDG/mug family. As to quaternary structure, binds DNA as a monomer.

It is found in the cytoplasm. The catalysed reaction is Specifically hydrolyzes mismatched double-stranded DNA and polynucleotides, releasing free uracil.. Excises ethenocytosine and uracil, which can arise by alkylation or deamination of cytosine, respectively, from the corresponding mispairs with guanine in ds-DNA. It is capable of hydrolyzing the carbon-nitrogen bond between the sugar-phosphate backbone of the DNA and the mispaired base. The complementary strand guanine functions in substrate recognition. Required for DNA damage lesion repair in stationary-phase cells. This Salmonella agona (strain SL483) protein is G/U mismatch-specific DNA glycosylase.